The sequence spans 809 residues: PiggyBac transposable element-derived protein 1 (809 aa).

The SCAN box domain occupies arginine 44–serine 126. Residues cysteine 170–proline 199 are disordered. A Glycyl lysine isopeptide (Lys-Gly) (interchain with G-Cter in SUMO2) cross-link involves residue lysine 218. The disordered stretch occupies residues lysine 271–proline 297. Serine 360 is modified (phosphoserine).

The sequence is that of PiggyBac transposable element-derived protein 1 (PGBD1) from Homo sapiens (Human).